The chain runs to 309 residues: MVGFKATDVPPTATVKFLGAGTAACIADLITFPLDTAKVRLQIQGESQGLVRTAASAQYRGVLGTILTMVRTEGPRSLYNGLVAGLQRQMSFASVRIGLYDSVKQFYTKGSEHAGIGSRLLAGSTTGALAVAVAQPTDVVKVRFQAQARAGGGRRYQSTVEAYKTIAREEGIRGLWKGTSPNVARNAIVNCAELVTYDLIKDTLLKANLMTDDLPCHFTSAFGAGFCTTVIASPVDVVKTRYMNSALGQYHSAGHCALTMLRKEGPRAFYKGFMPSFLRLGSWNVVMFVTYEQLKRALMAAYQSREAPF.

Over M1 to K16 the chain is Mitochondrial intermembrane. Solcar repeat units lie at residues P11 to F106, A114 to T203, and D212 to A297. The segment at K16–L63 is important for interaction with long-chain fatty acids. Residues F17–R40 form a helical membrane-spanning segment. Over L41–S77 the chain is Mitochondrial matrix. A helical transmembrane segment spans residues L78–V103. Topologically, residues K104 to R119 are mitochondrial intermembrane. Residues L120 to Q145 traverse the membrane as a helical segment. Topologically, residues A146 to R173 are mitochondrial matrix. Residues G174–L199 traverse the membrane as a helical segment. Over I200 to H217 the chain is Mitochondrial intermembrane. The helical transmembrane segment at F218–Y242 threads the bilayer. The Mitochondrial matrix segment spans residues M243–A268. Residues F269–L294 traverse the membrane as a helical segment. The tract at residues L278–V285 is important for interaction with long-chain fatty acids. Over K295–F309 the chain is Mitochondrial intermembrane.

It belongs to the mitochondrial carrier (TC 2.A.29) family. In terms of assembly, homotetramer. Adopts an asymmetrical dimer of dimers functional form. Interacts with MICU1 (when methylated); leading to decrease the calcium sensitivity of MICU1. In terms of tissue distribution, widely expressed. Highest in spleen, lung, white and brown adipose tissues. 4-6 times higher levels are detected in white adipose tissue of ob/ob and db/db mice when compared to lean littermates. Expressed in neurons of the ventromedial nucleus of the hypothalamus (at protein level). Expressed in thymocytes (at protein level).

The protein resides in the mitochondrion inner membrane. It carries out the reaction L-aspartate(out) + phosphate(in) + H(+)(in) = L-aspartate(in) + phosphate(out) + H(+)(out). It catalyses the reaction oxaloacetate(out) + phosphate(in) + H(+)(in) = oxaloacetate(in) + phosphate(out) + H(+)(out). The enzyme catalyses (S)-malate(out) + phosphate(in) + H(+)(in) = (S)-malate(in) + phosphate(out) + H(+)(out). The catalysed reaction is malonate(out) + phosphate(in) + H(+)(in) = malonate(in) + phosphate(out) + H(+)(out). It carries out the reaction sulfate(out) + phosphate(in) + H(+)(in) = sulfate(in) + phosphate(out) + H(+)(out). It catalyses the reaction (S)-malate(out) = (S)-malate(in). The enzyme catalyses L-aspartate(out) = L-aspartate(in). The catalysed reaction is phosphate(in) = phosphate(out). It carries out the reaction chloride(in) = chloride(out). It catalyses the reaction H(+)(in) = H(+)(out). The enzyme catalyses a long-chain fatty acid(out) = a long-chain fatty acid(in). Its activity is regulated as follows. Proton conductance is activated by free long-chain fatty acids and allosterically inhibited by purine nucleotides. Could be constitutively inhibited by GDP. In terms of biological role, antiporter that exports dicarboxylate intermediates of the Krebs cycle in exchange for phosphate plus a proton across the inner membrane of mitochondria, a process driven by mitochondrial motive force with an overall impact on glycolysis, glutaminolysis and glutathione-dependent redox balance. Continuous export of oxaloacetate and related four-carbon dicarboxylates from mitochondrial matrix into the cytosol negatively regulates the oxidation of acetyl-CoA substrates via the Krebs cycle lowering the ATP/ADP ratio and reactive oxygen species (ROS) production. May mediate inducible proton entry into the mitochondrial matrix affecting ATP turnover as a protection mechanism against oxidative stress. The proton currents are most likely associated with fatty acid flipping across the inner membrane of mitochondria in a metabolic process regulated by free fatty acids and purine nucleotides. Regulates the use of glucose as a source of energy. Required for glucose-induced DRP1-dependent mitochondrial fission and neuron activation in the ventromedial nucleus of the hypothalamus (VMH). This mitochondrial adaptation mechanism modulates the VMH pool of glucose-excited neurons with an impact on systemic glucose homeostasis. Regulates ROS levels and metabolic reprogramming of macrophages during the resolution phase of inflammation. Attenuates ROS production in response to IL33 to preserve the integrity of the Krebs cycle required for persistent production of itaconate and subsequent GATA3-dependent differentiation of inflammation-resolving alternatively activated macrophages. Can unidirectionally transport anions including L-malate, L-aspartate, phosphate and chloride ions. Does not mediate adaptive thermogenesis. This chain is Dicarboxylate carrier UCP2 (Ucp2), found in Mus musculus (Mouse).